The chain runs to 646 residues: Cysteine-rich receptor-like protein kinase 37 (646 aa).

Residues 1–26 (MGKSCVVTSSFSLLLLFLQTLKYVHA) form the signal peptide. 2 consecutive Gnk2-homologous domains span residues 27-132 (GFIC…NHST) and 142-252 (TINP…LYPY). Residues 27–287 (GFICYGDFFN…RDEKSFQGSN (261 aa)) lie on the Extracellular side of the membrane. N-linked (GlcNAc...) asparagine glycosylation is found at Asn62, Asn129, Asn169, and Asn180. A helical transmembrane segment spans residues 288–308 (IAIIVVPSVINLIIFVVLIFS). Residues 309–646 (WKRKQSHTII…LTRPSLSLGH (338 aa)) are Cytoplasmic-facing. Residues 345–626 (FSLENKLGQG…LFWLERHATI (282 aa)) enclose the Protein kinase domain. ATP contacts are provided by residues 351–359 (LGQGGFGSV) and Lys373. Tyr418 bears the Phosphotyrosine mark. The active-site Proton acceptor is Asp470. Phosphoserine is present on Ser474. Residue Thr510 is modified to Phosphothreonine. Tyr518 carries the post-translational modification Phosphotyrosine.

It belongs to the protein kinase superfamily. Ser/Thr protein kinase family. CRK subfamily.

The protein localises to the membrane. It catalyses the reaction L-seryl-[protein] + ATP = O-phospho-L-seryl-[protein] + ADP + H(+). It carries out the reaction L-threonyl-[protein] + ATP = O-phospho-L-threonyl-[protein] + ADP + H(+). The sequence is that of Cysteine-rich receptor-like protein kinase 37 (CRK37) from Arabidopsis thaliana (Mouse-ear cress).